The chain runs to 64 residues: Large ribosomal subunit protein bL35 (64 aa).

It belongs to the bacterial ribosomal protein bL35 family.

This Lactiplantibacillus plantarum (strain ATCC BAA-793 / NCIMB 8826 / WCFS1) (Lactobacillus plantarum) protein is Large ribosomal subunit protein bL35.